The chain runs to 1024 residues: Multidrug resistance protein MdtC (1024 aa).

The next 12 helical transmembrane spans lie at 12–32 (VATT…FSLL), 333–353 (EVER…FLFL), 360–380 (LIPA…MYLC), 387–407 (LSLM…IVVL), 431–451 (VGFT…PLLL), 463–483 (FAVT…TLTP), 528–548 (WVMV…ISIP), 853–873 (LWLI…LYES), 875–895 (VHPL…LLAL), 897–917 (LFDA…IGIV), 953–973 (PILM…ISSG), and 984–1004 (ITIV…TPVV).

It belongs to the resistance-nodulation-cell division (RND) (TC 2.A.6) family. MdtC subfamily. Part of a tripartite efflux system composed of MdtA, MdtB and MdtC. MdtC forms a heteromultimer with MdtB.

It is found in the cell inner membrane. The chain is Multidrug resistance protein MdtC from Yersinia enterocolitica serotype O:8 / biotype 1B (strain NCTC 13174 / 8081).